The following is a 669-amino-acid chain: MLWRRKSFWLALSAFWLLLVLLGVFPLRLAVLPGPLPGRSQGWPRWLDAAFLQSFSQSETNPEDVAQLPRVSRGSSCTWGACFDTSKCRGKVLKIFVHSPAGPTSEAQRRILDSLEGSRYSALSPADACLLLFLPSQDRRGACGPLPPNWNGGRNHLVLSLYPAPCTRLGQAMVAEASPSSDIFRPGFDLALPYLPEAHPLRGGAPGKLQQHSPQPGATLLAVAEEKGRWRITSTHASACLWDRHCEQDPGPQQTYPGETLPNATFCLIPGHRSATSCFLQALQAGCIPVLLSPRWELPFSEVIDWTKAAIIADERLPLQVLAALREMLPSRVLALRQQTQFLWTAYFSSVEKVIHTTLEIIQDRIWGASGHPSLMWNSPPGALLALPTFSTSLQDFPFYHLQLGSGPGSSFSAVIWVGASGESLLKLIQEVAGSRHCAQILILWNSEKLPPDRWPETAVPLTVIKGHRKVSNRFFPYSNISTNVILSLDAQSTLSTSEVDFAFVVWQSFPERMVGFLSGSHFWDEAQGGWGYRTGMTNEFSMVLTTAAFYHRYYHTLFTHSLPKALRTIADETPTCVDVLMNFLVATVTKLPPIKVPYGRQHPEAVPMDSGDPRPVPEPQPLDQDCINRLAAGFGHMPLVSSQVRLDPVLFKDPVSVQRKKYRSLEKP.

Residues 1-8 (MLWRRKSF) are Cytoplasmic-facing. The chain crosses the membrane as a helical; Signal-anchor for type II membrane protein span at residues 9–29 (WLALSAFWLLLVLLGVFPLRL). Topologically, residues 30-669 (AVLPGPLPGR…RKKYRSLEKP (640 aa)) are lumenal. N-linked (GlcNAc...) asparagine glycans are attached at residues N263 and N480. A disulfide bond links C577 and C627. The disordered stretch occupies residues 601-621 (RQHPEAVPMDSGDPRPVPEPQ).

This sequence belongs to the glycosyltransferase 47 family.

It is found in the endoplasmic reticulum membrane. The enzyme catalyses 3-O-{[(1-&gt;4)-beta-D-GlcA-(1-&gt;4)-alpha-D-GlcNAc](n)-(1-&gt;4)-beta-D-GlcA-(1-&gt;3)-beta-D-Gal-(1-&gt;3)-beta-D-Gal-(1-&gt;4)-beta-D-Xyl}-L-seryl-[protein] + UDP-N-acetyl-alpha-D-glucosamine = 3-O-{alpha-D-GlcNAc-[(1-&gt;4)-beta-D-GlcA-(1-&gt;4)-alpha-D-GlcNAc](n)-(1-&gt;4)-beta-D-GlcA-(1-&gt;3)-beta-D-Gal-(1-&gt;3)-beta-D-Gal-(1-&gt;4)-beta-D-Xyl}-L-seryl-[protein] + UDP + H(+). It functions in the pathway protein modification; protein glycosylation. Glycosyltransferase required for the biosynthesis of heparan-sulfate (HS). Transfers N-acetyl-alpha-D-glucosamine to the nascent HS chain (GlcNAcT-II activity). Appears to lack GlcNAcT I and GlcAT-II activities. This Mus musculus (Mouse) protein is Exostosin-like 1 (Extl1).